The sequence spans 425 residues: NNHGLQIQQQQQRNLSLHEYMSMELLQEAGVSIPKGHVAKSPDEAYAIAKKLGSKDVVIKAQVLAGGRGKGTFESGLKGGVKIVFSPEEAKAVSSQMIGKKLFTKQTGEKGRICNQVLVCERRYPRREYYFAITMERSFQGPVLIGSSQGGVNIEDVAAETPEAIVKEPIDIVEGIKKEQAVRLAQKMGFPPSIVDSAAENMIKLYNLFLKYDATMVEINPMVEDSDGAVLCMDAKINFDSNSAYRQKKIFDLQDWTQEDERDKDAAKANLNYIGLDGNIGCLVNGAGLAMATMDIIKLHGGTPANFLDVGGGATVHQVTEAFKLITSDKKVLSILVNIFGGIMRCDVIAQGIVMAVKDLEIKIPVVVRLQGTRVDDAKALIADSGLKILACDDLDEAAKMVVKLSEIVTLTKQAQVDVKFQLPI.

The N-terminal 14 residues, 1–14 (NNHGLQIQQQQQRN), are a transit peptide targeting the mitochondrion. Residues 23 to 250 (MELLQEAGVS…SNSAYRQKKI (228 aa)) form the ATP-grasp domain. An N6-acetyllysine modification is found at K40. Residue Y46 is modified to Phosphotyrosine. An N6-acetyllysine; alternate modification is found at K50. At K50 the chain carries N6-succinyllysine; alternate. ATP contacts are provided by residues K60 and 67–69 (GRG). Residues K91, K101, K105, and K178 each carry the N6-acetyllysine modification. The Mg(2+) site is built by N220 and D234. The residue at position 241 (S241) is a Phosphoserine. Position 285 (N285) interacts with substrate. The residue at position 303 (T303) is a Phosphothreonine. K330 carries the N6-acetyllysine modification. 342–344 (GIM) contributes to the substrate binding site. An N6-acetyllysine modification is found at K400.

This sequence belongs to the succinate/malate CoA ligase beta subunit family. ATP-specific subunit beta subfamily. As to quaternary structure, heterodimer of an alpha and a beta subunit. The beta subunit determines specificity for ATP. Interacts with ALAS2. The cofactor is Mg(2+).

It is found in the mitochondrion. The enzyme catalyses succinate + ATP + CoA = succinyl-CoA + ADP + phosphate. Its pathway is carbohydrate metabolism; tricarboxylic acid cycle; succinate from succinyl-CoA (ligase route): step 1/1. Functionally, ATP-specific succinyl-CoA synthetase functions in the citric acid cycle (TCA), coupling the hydrolysis of succinyl-CoA to the synthesis of ATP and thus represents the only step of substrate-level phosphorylation in the TCA. The beta subunit provides nucleotide specificity of the enzyme and binds the substrate succinate, while the binding sites for coenzyme A and phosphate are found in the alpha subunit. This Sus scrofa (Pig) protein is Succinate--CoA ligase [ADP-forming] subunit beta, mitochondrial.